A 403-amino-acid polypeptide reads, in one-letter code: Queuine tRNA-ribosyltransferase catalytic subunit 1 (403 aa).

Alanine 2 bears the N-acetylalanine mark. The Proton acceptor role is filled by aspartate 105. A queuine-binding site is contributed by 105–109 (DSGGF). Phosphoserine is present on serine 139. Residues aspartate 159, glutamine 202, and glycine 229 each coordinate queuine. Residues 260 to 266 (GVGYATD) form an RNA binding region. The Nucleophile role is filled by aspartate 279. Positions 284 to 288 (TRTAR) are RNA binding; important for wobble base 34 recognition. Zn(2+) is bound by residues cysteine 317, cysteine 319, cysteine 322, and histidine 348.

This sequence belongs to the queuine tRNA-ribosyltransferase family. In terms of assembly, heterodimer of a catalytic subunit QTRT1 and an accessory subunit QTRT2. Zn(2+) serves as cofactor.

The protein localises to the cytoplasm. It is found in the mitochondrion outer membrane. The enzyme catalyses guanosine(34) in tRNA + queuine = queuosine(34) in tRNA + guanine. Catalytic subunit of the queuine tRNA-ribosyltransferase (TGT) that catalyzes the base-exchange of a guanine (G) residue with queuine (Q) at position 34 (anticodon wobble position) in tRNAs with GU(N) anticodons (tRNA-Asp, -Asn, -His and -Tyr), resulting in the hypermodified nucleoside queuosine (7-(((4,5-cis-dihydroxy-2-cyclopenten-1-yl)amino)methyl)-7-deazaguanosine). Catalysis occurs through a double-displacement mechanism. The nucleophile active site attacks the C1' of nucleotide 34 to detach the guanine base from the RNA, forming a covalent enzyme-RNA intermediate. The proton acceptor active site deprotonates the incoming queuine, allowing a nucleophilic attack on the C1' of the ribose to form the product. This Rattus norvegicus (Rat) protein is Queuine tRNA-ribosyltransferase catalytic subunit 1.